The following is a 156-amino-acid chain: uncharacterized protein (156 aa).

Transmembrane regions (helical) follow at residues 7-29, 42-64, 69-88, 98-120, and 133-155; these read AQISVVLSTIIIMTYAFLSSYFL, YFALSNLLSLSLPFVCAWFPYLF, AVTGSALSAFGLFLFFAITS, AAIWVIYFFWLIGAALAGVYPAL, and ALVLSALFTVVVSFIIGFLISRI.

It is found in the cell membrane. This is an uncharacterized protein from Pasteurella multocida (strain Pm70).